We begin with the raw amino-acid sequence, 381 residues long: Periphilin-1 (381 aa).

3 stretches are compositionally biased toward basic and acidic residues: residues 1–28 (MWSE…DGYH), 39–65 (PLLD…GYSR), and 79–121 (RSFS…DGFR). Disordered stretches follow at residues 1-65 (MWSE…GYSR) and 79-260 (RSFS…KSDE). A Nuclear localization signal motif is present at residues 117–123 (RDGFRRK). Lysine 123 is covalently cross-linked (Glycyl lysine isopeptide (Lys-Gly) (interchain with G-Cter in SUMO2)). 4 positions are modified to phosphoserine: serine 124, serine 128, serine 147, and serine 154. A compositionally biased stretch (basic and acidic residues) spans 130–156 (YSRDRSPHKRDAPFFRESPVGRKDSPH). Positions 157–168 (SRSGSSVSSRSY) are enriched in low complexity. The span at 175-187 (THSFHQSQHRKSS) shows a compositional bias: basic residues. At serine 181 the chain carries Phosphoserine. Lysine 194 is covalently cross-linked (Glycyl lysine isopeptide (Lys-Gly) (interchain with G-Cter in SUMO2)). Basic and acidic residues predominate over residues 195 to 208 (RQNEAIRGRGKERS). Serine 211 bears the Phosphoserine mark. Residue lysine 213 forms a Glycyl lysine isopeptide (Lys-Gly) (interchain with G-Cter in SUMO2) linkage. Residues serine 215 and serine 219 each carry the phosphoserine modification. Residues 217 to 230 (DASPSSSSAVASSK) show a composition bias toward low complexity. Positions 231 to 260 (ALDKPSRLTEKELAEAESKWANETLEKSDE) are enriched in basic and acidic residues. Lysine 241 participates in a covalent cross-link: Glycyl lysine isopeptide (Lys-Gly) (interchain with G-Cter in SUMO2). Lysine 249 carries the post-translational modification N6-acetyllysine; alternate. Lysine 249 participates in a covalent cross-link: Glycyl lysine isopeptide (Lys-Gly) (interchain with G-Cter in SUMO2); alternate. Serine 339 is modified (phosphoserine). Residue lysine 342 forms a Glycyl lysine isopeptide (Lys-Gly) (interchain with G-Cter in SUMO2) linkage.

As to quaternary structure, homodimer. Component of the HUSH complex; at least composed of TASOR, PPHLN1 and MPHOSPH8. Interacts with SIN3A and HDAC1. May interact with PPL. As to expression, ubiquitously expressed. Strong expression in the developing somites and limbs, the embryonic nervous system and the adult brain.

Its subcellular location is the nucleus. It is found in the cytoplasm. The protein resides in the chromosome. Functionally, component of the HUSH complex, a multiprotein complex that mediates epigenetic repression. The HUSH complex is recruited to genomic loci rich in H3K9me3 and is probably required to maintain transcriptional silencing by promoting recruitment of SETDB1, a histone methyltransferase that mediates further deposition of H3K9me3. In the HUSH complex, contributes to the maintenance of the complex at chromatin. Acts as a transcriptional corepressor and regulates the cell cycle, probably via the HUSH complex. The HUSH complex is also involved in the silencing of unintegrated retroviral DNA: some part of the retroviral DNA formed immediately after infection remains unintegrated in the host genome and is transcriptionally repressed. May be involved in epithelial differentiation by contributing to epidermal integrity and barrier formation. This Mus musculus (Mouse) protein is Periphilin-1.